We begin with the raw amino-acid sequence, 571 residues long: MTLSPEDLKTIEKYALQNAVKYEKAPQSKAVMGKVMGECPQLRANPGAVSTALKSIVSEIAKGNPEAWKTRLSEIAPELIEALNVKKEPEKGLKPLEGAEPGKVVMRFAPNPNGPGTLGSARGMVVNSEYVKMYKGKFVLRFDDTDPDIKRPMLEAYDWYLDDFKWLGVVPDRVVYASDHFPIYYDYARKLIEMGKAYVCFCKGEDFKRLKDAKQACPHRDTSPEENLMHWEKMLAGEYEDQQAVLRIKTDIEHKDPALRDWGAFRIRKMSHPRAEIGNKYVVWPLLDFAGAIEDHELGMTHIIRGKDLIDSEKRQGYIYKYFGWTYPKTTHWGRVKIHEFGKFSTSSLRKAIEAGEYSGWDDPRLPTIRAIRRRGIQAEALKKFMIEMGVGMTDVSISMESLYAENRKIVDPVANRYFFVWAPVELEIAGMEPTVAKLPLHPTDHSRGVREIAVGNKVLVCAEDVEKLELGSVIRLKDFCNIEITSLSPLQAKHSDVSLEALKKAKAKIVHWAPVDGISVKVRGPEGDLEGIGEKGIVGELDKIVQFERFGFCRIDAVSEEKVVAYFAHK.

Positions 110 to 120 (PNPNGPGTLGS) match the 'HIGH' region motif.

It belongs to the class-I aminoacyl-tRNA synthetase family. Glutamate--tRNA ligase type 2 subfamily.

Its subcellular location is the cytoplasm. It carries out the reaction tRNA(Glu) + L-glutamate + ATP = L-glutamyl-tRNA(Glu) + AMP + diphosphate. Functionally, catalyzes the attachment of glutamate to tRNA(Glu) in a two-step reaction: glutamate is first activated by ATP to form Glu-AMP and then transferred to the acceptor end of tRNA(Glu). The sequence is that of Glutamate--tRNA ligase from Methanosarcina acetivorans (strain ATCC 35395 / DSM 2834 / JCM 12185 / C2A).